Here is a 203-residue protein sequence, read N- to C-terminus: Twist-related protein 1 (203 aa).

The span at 1-18 (MMQDVSSSPVSPADDSLS) shows a compositional bias: low complexity. The segment at 1-107 (MMQDVSSSPV…GGSPQSCEEL (107 aa)) is disordered. The span at 34–43 (RGGRKRRSSR) shows a compositional bias: basic residues. Composition is skewed to gly residues over residues 46–65 (AGGG…GGDE) and 80–100 (GCGG…GGGS). Residues 109 to 160 (TQRVMANVRERQRTQSLNEPFAALRKIIPTLPSDKLSKIQTLKLAARYIDFL) enclose the bHLH domain. Positions 162 to 192 (RVLQSDELDSKTASCSYVAHEWLSYAFSVWR) are sufficient for transactivation activity.

In terms of assembly, efficient DNA binding requires dimerization with another bHLH protein. Homodimer or heterodimer with E proteins such as TCF3. ID1 binds preferentially to TCF3 but does not interact efficiently with TWIST1 so ID1 levels control the amount of TCF3 available to dimerize with TWIST and thus determine the type of dimer formed.

Its subcellular location is the nucleus. Functionally, acts as a transcriptional regulator. Inhibits myogenesis by sequestrating E proteins, inhibiting trans-activation by MEF2, and inhibiting DNA-binding by MYOD1 through physical interaction. This interaction probably involves the basic domains of both proteins. Also represses expression of pro-inflammatory cytokines such as TNFA and IL1B. Regulates cranial suture patterning and fusion. Activates transcription as a heterodimer with E proteins. Regulates gene expression differentially, depending on dimer composition. Homodimers induce expression of FGFR2 and POSTN while heterodimers repress FGFR2 and POSTN expression and induce THBS1 expression. Heterodimerization is also required for osteoblast differentiation. Represses the activity of the circadian transcriptional activator: NPAS2-BMAL1 heterodimer. The sequence is that of Twist-related protein 1 (TWIST1) from Gorilla gorilla gorilla (Western lowland gorilla).